The primary structure comprises 436 residues: Cholecystokinin receptor type A (436 aa).

The Extracellular portion of the chain corresponds to 1-41 (MDVVDSLLMNGSNITPPCELGLENETLFCLDQPQPSKEWQS). 2 N-linked (GlcNAc...) asparagine glycosylation sites follow: Asn10 and Asn24. A disulfide bond links Cys18 and Cys29. The chain crosses the membrane as a helical span at residues 42–67 (AVQILLYSFIFLLSVLGNTLVITVLI). Residues 68-77 (RNKRMRTVTN) lie on the Cytoplasmic side of the membrane. Residues 78–104 (IFLLSLAVSDLMLCLFCMPFNLIPNLL) form a helical membrane-spanning segment. Residues 105-115 (KDFIFGSAVCK) are Extracellular-facing. Cysteines 114 and 196 form a disulfide. Residues 116–137 (TTTYFMGTSVSVSTFNLVAISL) form a helical membrane-spanning segment. The Cytoplasmic segment spans residues 138 to 157 (ERYGAICRPLQSRVWQTKSH). The helical transmembrane segment at 158–178 (ALKVIAATWCLSFTIMTPYPI) threads the bilayer. Topologically, residues 179–210 (YSNLVPFTKNNNQTANMCRFLLPSDAMQQSWQ) are extracellular. The N-linked (GlcNAc...) asparagine glycan is linked to Asn190. The helical transmembrane segment at 211-234 (TFLLLILFLIPGVVMVVAYGLISL) threads the bilayer. Topologically, residues 235 to 321 (ELYQGIKFDA…NLIAKKRVIR (87 aa)) are cytoplasmic. The segment at 252–280 (EKRLSSGGGGGGGSSSSRYEDSDGCYLQK) is disordered. Residues 322–342 (MLIVIVVLFFLCWMPIFSANA) form a helical membrane-spanning segment. The Extracellular portion of the chain corresponds to 343–357 (WRAYDTVSAEKHLSG). The helical transmembrane segment at 358–381 (TPISFILLLSYTSSCVNPIIYCFM) threads the bilayer. Topologically, residues 382–436 (NKRFRLGFMATFPCCPNPGPTGVRGEVGEEEDGRTIRASLSRYSYSHMSTSAPPH) are cytoplasmic. Cys395 is lipidated: S-palmitoyl cysteine.

Belongs to the G-protein coupled receptor 1 family.

It localises to the cell membrane. In terms of biological role, receptor for cholecystokinin. Mediates pancreatic growth and enzyme secretion, smooth muscle contraction of the gall bladder and stomach. Has a 1000-fold higher affinity for CCK rather than for gastrin. It modulates feeding and dopamine-induced behavior in the central and peripheral nervous system. This receptor mediates its action by association with G proteins that activate a phosphatidylinositol-calcium second messenger system. The protein is Cholecystokinin receptor type A (Cckar) of Mus musculus (Mouse).